A 58-amino-acid chain; its full sequence is Large ribosomal subunit protein uL30 (58 aa).

The protein belongs to the universal ribosomal protein uL30 family. In terms of assembly, part of the 50S ribosomal subunit.

The protein is Large ribosomal subunit protein uL30 of Desulfovibrio desulfuricans (strain ATCC 27774 / DSM 6949 / MB).